A 323-amino-acid chain; its full sequence is G patch domain-containing protein 4 (323 aa).

Disordered stretches follow at residues 1-32 (MSASSGEKSQGRRFAEQQMHKHGWTEGKGLGR), 84-110 (GVKVNRTKDDDAPVTNKKPRKALSNRN), 124-185 (PGGE…SAKL), and 197-323 (AKYG…NKSE). Composition is skewed to basic and acidic residues over residues 9–32 (SQGRRFAEQQMHKHGWTEGKGLGR) and 84–94 (GVKVNRTKDDD). The region spanning 11–57 (GRRFAEQQMHKHGWTEGKGLGRRENGISEAIKVKVKCDHAGVGHNSA) is the G-patch domain. The span at 131–141 (KEPSSSESSDS) shows a compositional bias: low complexity. The span at 252–261 (EREEEEEEES) shows a compositional bias: acidic residues. The segment covering 281–291 (SKKKKSKKKHR) has biased composition (basic residues). Polar residues predominate over residues 294-306 (SASPQEEQVTEST). Residues 311-323 (KPKKKKKKKNKSE) show a composition bias toward basic residues.

In Xenopus tropicalis (Western clawed frog), this protein is G patch domain-containing protein 4 (gpatch4).